The primary structure comprises 274 residues: Glutamate racemase (274 aa).

Residues 10-11 (DS) and 42-43 (YG) each bind substrate. The Proton donor/acceptor role is filled by Cys73. 74–75 (NT) serves as a coordination point for substrate. Cys184 functions as the Proton donor/acceptor in the catalytic mechanism. Position 185–186 (185–186 (TH)) interacts with substrate.

This sequence belongs to the aspartate/glutamate racemases family.

It carries out the reaction L-glutamate = D-glutamate. The protein operates within cell wall biogenesis; peptidoglycan biosynthesis. Functionally, provides the (R)-glutamate required for cell wall biosynthesis. This chain is Glutamate racemase, found in Latilactobacillus sakei subsp. sakei (strain 23K) (Lactobacillus sakei subsp. sakei).